The primary structure comprises 239 residues: MIALIVLPILAAVLQQSSGSVDFDSESPRKPEIQNKIVDLHNSLRRSVNPTASNMLKMEWYSEAAANAERWAYRCIESHSPRDSRVLEGIKCGENIYMSSVPMKWTEIIHIWHGENKNFKYGIGADPPNAVTGHYTQIVWYKSYRAGCAAAYCPSLEYSYFYVCQYCPAGNIRGKTATPYKSGPPCGDCPSACDNGLCTNPCPKKISTQLPRFGPQAGCQDKQMQSDCSATCFCQNKII.

A signal peptide spans Met-1 to Gly-19. The SCP domain occupies Val-38–Tyr-166. 7 cysteine pairs are disulfide-bonded: Cys-75–Cys-153, Cys-92–Cys-167, Cys-148–Cys-164, Cys-186–Cys-193, Cys-189–Cys-198, Cys-202–Cys-234, and Cys-219–Cys-232. A ShKT domain is found at Cys-198 to Cys-234.

Belongs to the CRISP family. Expressed by the venom gland.

The protein resides in the secreted. In terms of biological role, weakly blocks contraction of smooth muscle elicited by high potassium-induced depolarization, but does not block caffeine-stimulated contraction. May target voltage-gated calcium channels on smooth muscle. The protein is Cysteine-rich venom protein 2 of Sistrurus catenatus edwardsii (Desert massasauga).